The following is a 259-amino-acid chain: Ribonuclease HII (259 aa).

One can recognise an RNase H type-2 domain in the interval 70 to 258 (TLIAGIDEVG…VKSLVLGKKE (189 aa)). A divalent metal cation is bound by residues aspartate 76, glutamate 77, and aspartate 168.

This sequence belongs to the RNase HII family. Mn(2+) is required as a cofactor. Requires Mg(2+) as cofactor.

It localises to the cytoplasm. It catalyses the reaction Endonucleolytic cleavage to 5'-phosphomonoester.. In terms of biological role, endonuclease that specifically degrades the RNA of RNA-DNA hybrids. The chain is Ribonuclease HII from Streptococcus pneumoniae (strain Taiwan19F-14).